The chain runs to 376 residues: Carboxylic ester hydrolase LipN (376 aa).

Active-site residues include Ser216, Asp316, and His346.

This sequence belongs to the 'GDXG' lipolytic enzyme family.

It localises to the cytoplasm. The enzyme catalyses a carboxylic ester + H2O = an alcohol + a carboxylate + H(+). It catalyses the reaction an acetyl ester + H2O = an aliphatic alcohol + acetate + H(+). It carries out the reaction a butanoate ester + H2O = an aliphatic alcohol + butanoate + H(+). The catalysed reaction is an octanoate ester + H2O = an aliphatic alcohol + octanoate + H(+). The enzyme catalyses decanoate ester + H2O = decanoate + an aliphatic alcohol + H(+). It catalyses the reaction a dodecanoate ester + H2O = an aliphatic alcohol + dodecanoate + H(+). It carries out the reaction 1,2,3-tributanoylglycerol + H2O = dibutanoylglycerol + butanoate + H(+). The catalysed reaction is 4-acetoxyphenol + H2O = hydroquinone + acetate + H(+). Its activity is regulated as follows. Completely inhibited by tetrahydrolipstatin (THL), RHC-80267 and N-bromosuccinimide. In terms of biological role, non specific carboxylic ester hydrolase. Hydrolyzes various pNP-esters, with a preference for short carbon chain substrates. Can also hydrolyze tributyrin to di- and monobutyrin and 4-hydroxyphenylacetate to hydroquinone. This Mycobacterium tuberculosis (strain ATCC 25618 / H37Rv) protein is Carboxylic ester hydrolase LipN.